The following is a 271-amino-acid chain: 2,3,4,5-tetrahydropyridine-2,6-dicarboxylate N-succinyltransferase (271 aa).

Positions 102 and 139 each coordinate substrate.

Belongs to the transferase hexapeptide repeat family. Homotrimer.

The protein resides in the cytoplasm. It carries out the reaction (S)-2,3,4,5-tetrahydrodipicolinate + succinyl-CoA + H2O = (S)-2-succinylamino-6-oxoheptanedioate + CoA. It participates in amino-acid biosynthesis; L-lysine biosynthesis via DAP pathway; LL-2,6-diaminopimelate from (S)-tetrahydrodipicolinate (succinylase route): step 1/3. This is 2,3,4,5-tetrahydropyridine-2,6-dicarboxylate N-succinyltransferase from Coxiella burnetii (strain RSA 331 / Henzerling II).